Consider the following 115-residue polypeptide: C-type natriuretic peptide prohormone (115 aa).

Positions 24-49 are disordered; it reads PSDELNNEAEEMSPAASLPELNADQS. An intrachain disulfide couples Cys-99 to Cys-115.

It belongs to the natriuretic peptide family. As to expression, CNP-115 is differentially processed to produce CNP-38 and CNP-39 in the heart and CNP-22 in the brain.

The protein localises to the secreted. Its function is as follows. Hormone which may be vasoactive and natriuretic. Has a cGMP-stimulating activity. The chain is C-type natriuretic peptide prohormone from Scyliorhinus canicula (Small-spotted catshark).